The primary structure comprises 413 residues: Serine hydroxymethyltransferase (413 aa).

(6S)-5,6,7,8-tetrahydrofolate is bound by residues Leu119 and 123-125 (GHL). At Lys228 the chain carries N6-(pyridoxal phosphate)lysine. Residue 351-353 (SPF) coordinates (6S)-5,6,7,8-tetrahydrofolate.

Belongs to the SHMT family. In terms of assembly, homodimer. Pyridoxal 5'-phosphate is required as a cofactor.

The protein localises to the cytoplasm. The enzyme catalyses (6R)-5,10-methylene-5,6,7,8-tetrahydrofolate + glycine + H2O = (6S)-5,6,7,8-tetrahydrofolate + L-serine. It functions in the pathway one-carbon metabolism; tetrahydrofolate interconversion. The protein operates within amino-acid biosynthesis; glycine biosynthesis; glycine from L-serine: step 1/1. In terms of biological role, catalyzes the reversible interconversion of serine and glycine with tetrahydrofolate (THF) serving as the one-carbon carrier. This reaction serves as the major source of one-carbon groups required for the biosynthesis of purines, thymidylate, methionine, and other important biomolecules. Also exhibits THF-independent aldolase activity toward beta-hydroxyamino acids, producing glycine and aldehydes, via a retro-aldol mechanism. The protein is Serine hydroxymethyltransferase of Clostridium botulinum (strain Okra / Type B1).